Here is a 734-residue protein sequence, read N- to C-terminus: Photosystem I P700 chlorophyll a apoprotein A2 (734 aa).

8 helical membrane-spanning segments follow: residues 46–69 (IFAS…FHVA), 135–158 (LYTG…LHLQ), 175–199 (LNHH…HVAI), 273–291 (IAHH…GHMY), 330–353 (IHFQ…QHMY), 369–395 (AALY…IFFI), 417–439 (AIIS…LYVH), and 517–535 (FLVH…LILV). [4Fe-4S] cluster-binding residues include Cys-559 and Cys-568. Transmembrane regions (helical) follow at residues 575–596 (AFYL…YWHW) and 643–665 (LSVW…MFLI). Residues His-654, Met-662, and Tyr-670 each contribute to the chlorophyll a site. Trp-671 serves as a coordination point for phylloquinone. Residues 707-727 (LVGLAHFSVGYIFTYAAFLIA) traverse the membrane as a helical segment.

The protein belongs to the PsaA/PsaB family. In terms of assembly, the PsaA/B heterodimer binds the P700 chlorophyll special pair and subsequent electron acceptors. PSI consists of a core antenna complex that captures photons, and an electron transfer chain that converts photonic excitation into a charge separation. The eukaryotic PSI reaction center is composed of at least 11 subunits. It depends on P700 is a chlorophyll a/chlorophyll a' dimer, A0 is one or more chlorophyll a, A1 is one or both phylloquinones and FX is a shared 4Fe-4S iron-sulfur center. as a cofactor.

The protein resides in the plastid. It localises to the chloroplast thylakoid membrane. It carries out the reaction reduced [plastocyanin] + hnu + oxidized [2Fe-2S]-[ferredoxin] = oxidized [plastocyanin] + reduced [2Fe-2S]-[ferredoxin]. Functionally, psaA and PsaB bind P700, the primary electron donor of photosystem I (PSI), as well as the electron acceptors A0, A1 and FX. PSI is a plastocyanin-ferredoxin oxidoreductase, converting photonic excitation into a charge separation, which transfers an electron from the donor P700 chlorophyll pair to the spectroscopically characterized acceptors A0, A1, FX, FA and FB in turn. Oxidized P700 is reduced on the lumenal side of the thylakoid membrane by plastocyanin. The sequence is that of Photosystem I P700 chlorophyll a apoprotein A2 from Gossypium hirsutum (Upland cotton).